The primary structure comprises 156 residues: Arginine repressor (156 aa).

Belongs to the ArgR family.

The protein localises to the cytoplasm. It functions in the pathway amino-acid biosynthesis; L-arginine biosynthesis [regulation]. In terms of biological role, regulates arginine biosynthesis genes. The protein is Arginine repressor of Shewanella piezotolerans (strain WP3 / JCM 13877).